Reading from the N-terminus, the 157-residue chain is Ribosome maturation factor RimP (157 aa).

This sequence belongs to the RimP family.

It is found in the cytoplasm. Its function is as follows. Required for maturation of 30S ribosomal subunits. This is Ribosome maturation factor RimP from Lactococcus lactis subsp. lactis (strain IL1403) (Streptococcus lactis).